Reading from the N-terminus, the 415-residue chain is Glucose-6-phosphate isomerase (415 aa).

Residue glutamate 267 is the Proton donor of the active site. Catalysis depends on residues histidine 293 and lysine 406.

This sequence belongs to the GPI family.

It localises to the cytoplasm. It carries out the reaction alpha-D-glucose 6-phosphate = beta-D-fructose 6-phosphate. The protein operates within carbohydrate biosynthesis; gluconeogenesis. Its pathway is carbohydrate degradation; glycolysis; D-glyceraldehyde 3-phosphate and glycerone phosphate from D-glucose: step 2/4. In terms of biological role, catalyzes the reversible isomerization of glucose-6-phosphate to fructose-6-phosphate. This Thermus thermophilus (strain ATCC 27634 / DSM 579 / HB8) protein is Glucose-6-phosphate isomerase.